Consider the following 290-residue polypeptide: Nucleoid occlusion protein (290 aa).

Positions 153–172 (EALAQRLGKGQSTIANKLRL) form a DNA-binding region, H-T-H motif.

Belongs to the ParB family.

It is found in the cytoplasm. It localises to the nucleoid. In terms of biological role, effects nucleoid occlusion by binding relatively nonspecifically to DNA and preventing the assembly of the division machinery in the vicinity of the nucleoid, especially under conditions that disturb the cell cycle. It helps to coordinate cell division and chromosome segregation by preventing the formation of the Z ring through the nucleoid, which would cause chromosome breakage. The polypeptide is Nucleoid occlusion protein (Bacillus anthracis (strain A0248)).